Consider the following 203-residue polypeptide: ATP-dependent Clp protease proteolytic subunit 1 (203 aa).

The Nucleophile role is filled by serine 101. Residue histidine 126 is part of the active site.

Belongs to the peptidase S14 family. In terms of assembly, fourteen ClpP subunits assemble into 2 heptameric rings which stack back to back to give a disk-like structure with a central cavity, resembling the structure of eukaryotic proteasomes.

The protein resides in the cytoplasm. It carries out the reaction Hydrolysis of proteins to small peptides in the presence of ATP and magnesium. alpha-casein is the usual test substrate. In the absence of ATP, only oligopeptides shorter than five residues are hydrolyzed (such as succinyl-Leu-Tyr-|-NHMec, and Leu-Tyr-Leu-|-Tyr-Trp, in which cleavage of the -Tyr-|-Leu- and -Tyr-|-Trp bonds also occurs).. Its function is as follows. Cleaves peptides in various proteins in a process that requires ATP hydrolysis. Has a chymotrypsin-like activity. Plays a major role in the degradation of misfolded proteins. This chain is ATP-dependent Clp protease proteolytic subunit 1, found in Synechococcus sp. (strain JA-3-3Ab) (Cyanobacteria bacterium Yellowstone A-Prime).